A 150-amino-acid polypeptide reads, in one-letter code: Ribosome maturation factor RimP (150 aa).

It belongs to the RimP family.

Its subcellular location is the cytoplasm. Functionally, required for maturation of 30S ribosomal subunits. This is Ribosome maturation factor RimP from Francisella tularensis subsp. holarctica (strain LVS).